Consider the following 396-residue polypeptide: Phosphoglycerate kinase (396 aa).

Residues 21 to 23 (DLN), Arg36, 59 to 62 (HLGR), Arg113, and Arg146 each bind substrate. ATP is bound by residues Lys197, Glu319, and 345–348 (GGDT).

It belongs to the phosphoglycerate kinase family. Monomer.

Its subcellular location is the cytoplasm. The catalysed reaction is (2R)-3-phosphoglycerate + ATP = (2R)-3-phospho-glyceroyl phosphate + ADP. The protein operates within carbohydrate degradation; glycolysis; pyruvate from D-glyceraldehyde 3-phosphate: step 2/5. The protein is Phosphoglycerate kinase of Legionella pneumophila (strain Paris).